We begin with the raw amino-acid sequence, 206 residues long: 3-demethoxyubiquinol 3-hydroxylase (206 aa).

6 residues coordinate Fe cation: glutamate 55, glutamate 85, histidine 88, glutamate 137, glutamate 169, and histidine 172.

Belongs to the COQ7 family. Fe cation is required as a cofactor.

The protein resides in the cell membrane. The enzyme catalyses a 5-methoxy-2-methyl-3-(all-trans-polyprenyl)benzene-1,4-diol + AH2 + O2 = a 3-demethylubiquinol + A + H2O. The protein operates within cofactor biosynthesis; ubiquinone biosynthesis. Functionally, catalyzes the hydroxylation of 2-nonaprenyl-3-methyl-6-methoxy-1,4-benzoquinol during ubiquinone biosynthesis. The chain is 3-demethoxyubiquinol 3-hydroxylase from Aromatoleum aromaticum (strain DSM 19018 / LMG 30748 / EbN1) (Azoarcus sp. (strain EbN1)).